The primary structure comprises 589 residues: 3-(3-hydroxy-phenyl)propionate/3-hydroxycinnamic acid hydroxylase (589 aa).

Residues 15 to 44 (DVLIIGAGPVGLTLANTLGMAGVRVIVAEK) and 283 to 293 (FRVDRILLAGD) each bind FAD.

The protein belongs to the PheA/TfdB FAD monooxygenase family. FAD serves as cofactor.

It catalyses the reaction 3-(3-hydroxyphenyl)propanoate + NADH + O2 + H(+) = 3-(2,3-dihydroxyphenyl)propanoate + NAD(+) + H2O. It carries out the reaction (2E)-3-(3-hydroxyphenyl)prop-2-enoate + NADH + O2 + H(+) = (2E)-3-(2,3-dihydroxyphenyl)prop-2-enoate + NAD(+) + H2O. It functions in the pathway aromatic compound metabolism; 3-phenylpropanoate degradation. Functionally, catalyzes the insertion of one atom of molecular oxygen into position 2 of the phenyl ring of 3-(3-hydroxyphenyl)propionate (3-HPP) and hydroxycinnamic acid (3HCI). The sequence is that of 3-(3-hydroxy-phenyl)propionate/3-hydroxycinnamic acid hydroxylase from Comamonas testosteroni (Pseudomonas testosteroni).